We begin with the raw amino-acid sequence, 481 residues long: Glycogen synthase (481 aa).

K15 serves as a coordination point for ADP-alpha-D-glucose.

It belongs to the glycosyltransferase 1 family. Bacterial/plant glycogen synthase subfamily.

It catalyses the reaction [(1-&gt;4)-alpha-D-glucosyl](n) + ADP-alpha-D-glucose = [(1-&gt;4)-alpha-D-glucosyl](n+1) + ADP + H(+). It functions in the pathway glycan biosynthesis; glycogen biosynthesis. Functionally, synthesizes alpha-1,4-glucan chains using ADP-glucose. The chain is Glycogen synthase from Thermosipho melanesiensis (strain DSM 12029 / CIP 104789 / BI429).